Here is a 503-residue protein sequence, read N- to C-terminus: Aspartyl/glutamyl-tRNA(Asn/Gln) amidotransferase subunit B (503 aa).

It belongs to the GatB/GatE family. GatB subfamily. In terms of assembly, heterotrimer of A, B and C subunits.

It catalyses the reaction L-glutamyl-tRNA(Gln) + L-glutamine + ATP + H2O = L-glutaminyl-tRNA(Gln) + L-glutamate + ADP + phosphate + H(+). The catalysed reaction is L-aspartyl-tRNA(Asn) + L-glutamine + ATP + H2O = L-asparaginyl-tRNA(Asn) + L-glutamate + ADP + phosphate + 2 H(+). In terms of biological role, allows the formation of correctly charged Asn-tRNA(Asn) or Gln-tRNA(Gln) through the transamidation of misacylated Asp-tRNA(Asn) or Glu-tRNA(Gln) in organisms which lack either or both of asparaginyl-tRNA or glutaminyl-tRNA synthetases. The reaction takes place in the presence of glutamine and ATP through an activated phospho-Asp-tRNA(Asn) or phospho-Glu-tRNA(Gln). The chain is Aspartyl/glutamyl-tRNA(Asn/Gln) amidotransferase subunit B from Cereibacter sphaeroides (strain ATCC 17025 / ATH 2.4.3) (Rhodobacter sphaeroides).